The chain runs to 163 residues: Nucleotide-binding protein syc0675_c (163 aa).

Belongs to the YajQ family.

Functionally, nucleotide-binding protein. This Synechococcus sp. (strain ATCC 27144 / PCC 6301 / SAUG 1402/1) (Anacystis nidulans) protein is Nucleotide-binding protein syc0675_c.